A 338-amino-acid polypeptide reads, in one-letter code: MRVLGIETSCDETGIAVYDDELGLLSHTLYSQVKLHADYGGVVPELASRDHVRKIVPLIRQALKDANTEMADLDGIAYTKGPGLIGALLVGACVGRSLAFAWDKPAIGVHHMEGHLLAPMLEDDAPEFPFVALLVSGGHSMLVKVDGIGRYEVLGESVDDAAGEAFDKTAKLMGLDYPGGPRLAKLAAKGLPAGYKFPRPMTDRPGLDFSFSGLKTFTANTIAAEPDDEQTRANIARAFEEAVVDTLAIKCRRALKQTGYNRLVIAGGVSANTRLRETLAEMMNSLGGQVFYPRGEFCTDNGAMIAFSGLQRLKAGQYEDLAVKGQPRWPLDTLPPVA.

The Fe cation site is built by histidine 111 and histidine 115. Substrate is bound by residues 134–138 (LVSGG), aspartate 167, glycine 180, and asparagine 272. Residue aspartate 300 coordinates Fe cation.

This sequence belongs to the KAE1 / TsaD family. Requires Fe(2+) as cofactor.

Its subcellular location is the cytoplasm. The catalysed reaction is L-threonylcarbamoyladenylate + adenosine(37) in tRNA = N(6)-L-threonylcarbamoyladenosine(37) in tRNA + AMP + H(+). In terms of biological role, required for the formation of a threonylcarbamoyl group on adenosine at position 37 (t(6)A37) in tRNAs that read codons beginning with adenine. Is involved in the transfer of the threonylcarbamoyl moiety of threonylcarbamoyl-AMP (TC-AMP) to the N6 group of A37, together with TsaE and TsaB. TsaD likely plays a direct catalytic role in this reaction. The sequence is that of tRNA N6-adenosine threonylcarbamoyltransferase from Shewanella baltica (strain OS155 / ATCC BAA-1091).